The chain runs to 122 residues: Protein U68 (122 aa).

Belongs to the herpesviridae UL96 family.

The polypeptide is Protein U68 (Elephas maximus (Indian elephant)).